The chain runs to 421 residues: MEF2-activating motif and SAP domain-containing transcriptional regulator (421 aa).

The MEF2-binding motif lies at 12–28 (IIRSKFRSVLQLRIHRR). 3 disordered regions span residues 104–156 (PPEQ…PPSH), 188–296 (KAML…ASLT), and 322–406 (DQVE…ADLS). The region spanning 165-199 (LEELTVSELRQQLRLRGLPVSGTKAMLLERMRGGT) is the SAP domain. Basic and acidic residues predominate over residues 191–214 (LLERMRGGTPPRERPKPRREDKEA). The transcription activation stretch occupies residues 208-421 (RREDKEAAAP…LLWELLPDPW (214 aa)). Over residues 230 to 241 (RLPSTVKASATN) the composition is skewed to polar residues. The span at 260–292 (ASVPAPTPSPALAPTPTPAPVPAPAPAPFPTPP) shows a compositional bias: pro residues. Residues 347–372 (SPDSEGFSSVFSSSLPSPTSSLSPSP) are compositionally biased toward low complexity.

As to quaternary structure, interacts with MEF2C. Expressed in skeletal muscle, brain, placenta and spleen.

Its subcellular location is the nucleus. In terms of biological role, transcriptional coactivator. Stimulates the transcriptional activity of MEF2C. Stimulates MYOD1 activity in part via MEF2, resulting in an enhancement of skeletal muscle differentiation. The chain is MEF2-activating motif and SAP domain-containing transcriptional regulator (Mamstr) from Mus musculus (Mouse).